A 139-amino-acid chain; its full sequence is Small ribosomal subunit protein bS6 (139 aa).

Positions 114 to 133 (KKEPREPRAPREPRVEKVDE) are enriched in basic and acidic residues. The segment at 114–139 (KKEPREPRAPREPRVEKVDEQTFTEE) is disordered.

It belongs to the bacterial ribosomal protein bS6 family.

In terms of biological role, binds together with bS18 to 16S ribosomal RNA. In Campylobacter concisus (strain 13826), this protein is Small ribosomal subunit protein bS6.